The sequence spans 186 residues: MLKQKYKSEVVSALVKEFQYSSVMEVPRIEKIVVNMTAGKEVNNSKAIEEVLNELTLITGQKPYQTVAKKSNAAWKLRKNMPMGGKVTLRKDRMWDFLEKLITVAMPRIRDFRGANHKAFDKNGNFALGIKEEIIFPEIEFDKIRRNKGLDVIVVTTAKTAKESKRLLELLGMPFDDKKHTKESAK.

This sequence belongs to the universal ribosomal protein uL5 family. In terms of assembly, part of the 50S ribosomal subunit; part of the 5S rRNA/L5/L18/L25 subcomplex. Contacts the 5S rRNA and the P site tRNA. Forms a bridge to the 30S subunit in the 70S ribosome.

In terms of biological role, this is one of the proteins that bind and probably mediate the attachment of the 5S RNA into the large ribosomal subunit, where it forms part of the central protuberance. In the 70S ribosome it contacts protein S13 of the 30S subunit (bridge B1b), connecting the 2 subunits; this bridge is implicated in subunit movement. Contacts the P site tRNA; the 5S rRNA and some of its associated proteins might help stabilize positioning of ribosome-bound tRNAs. The chain is Large ribosomal subunit protein uL5 from Mycoplasmopsis synoviae (strain 53) (Mycoplasma synoviae).